Here is a 428-residue protein sequence, read N- to C-terminus: GTPase Obg (428 aa).

The 158-residue stretch at 1-158 (MFIDQVKIYV…RDVILELKVL (158 aa)) folds into the Obg domain. The OBG-type G domain maps to 159-329 (ADVGLVGFPS…LLFEVANLIE (171 aa)). Residues 165-172 (GFPSVGKS), 190-194 (FTTIV), 212-215 (DLPG), 282-285 (NKMD), and 310-312 (SAV) each bind GTP. Positions 172 and 192 each coordinate Mg(2+). The 79-residue stretch at 350–428 (KFETEGVKFD…ILEYEFEFID (79 aa)) folds into the OCT domain.

This sequence belongs to the TRAFAC class OBG-HflX-like GTPase superfamily. OBG GTPase family. In terms of assembly, monomer. Mg(2+) is required as a cofactor.

The protein localises to the cytoplasm. Functionally, an essential GTPase which binds GTP, GDP and possibly (p)ppGpp with moderate affinity, with high nucleotide exchange rates and a fairly low GTP hydrolysis rate. Plays a role in control of the cell cycle, stress response, ribosome biogenesis and in those bacteria that undergo differentiation, in morphogenesis control. The polypeptide is GTPase Obg (Bacillus anthracis).